The sequence spans 1026 residues: Multidrug resistance protein MdtC (1026 aa).

The next 11 helical transmembrane spans lie at I15 to A35, E333 to L353, L360 to C380, L387 to L407, V431 to L451, F463 to P483, L528 to P548, L853 to S873, L897 to V917, P953 to G973, and I984 to V1004.

This sequence belongs to the resistance-nodulation-cell division (RND) (TC 2.A.6) family. MdtC subfamily. As to quaternary structure, part of a tripartite efflux system composed of MdtA, MdtB and MdtC. MdtC forms a heteromultimer with MdtB.

It is found in the cell inner membrane. This chain is Multidrug resistance protein MdtC, found in Salmonella paratyphi A (strain ATCC 9150 / SARB42).